We begin with the raw amino-acid sequence, 270 residues long: Putative pyruvate, phosphate dikinase regulatory protein (270 aa).

Position 149 to 156 (G149 to T156) interacts with ADP.

The protein belongs to the pyruvate, phosphate/water dikinase regulatory protein family. PDRP subfamily.

It catalyses the reaction N(tele)-phospho-L-histidyl/L-threonyl-[pyruvate, phosphate dikinase] + ADP = N(tele)-phospho-L-histidyl/O-phospho-L-threonyl-[pyruvate, phosphate dikinase] + AMP + H(+). The catalysed reaction is N(tele)-phospho-L-histidyl/O-phospho-L-threonyl-[pyruvate, phosphate dikinase] + phosphate + H(+) = N(tele)-phospho-L-histidyl/L-threonyl-[pyruvate, phosphate dikinase] + diphosphate. In terms of biological role, bifunctional serine/threonine kinase and phosphorylase involved in the regulation of the pyruvate, phosphate dikinase (PPDK) by catalyzing its phosphorylation/dephosphorylation. The polypeptide is Putative pyruvate, phosphate dikinase regulatory protein (Sphingopyxis alaskensis (strain DSM 13593 / LMG 18877 / RB2256) (Sphingomonas alaskensis)).